A 143-amino-acid chain; its full sequence is Nucleoside diphosphate kinase (143 aa).

ATP is bound by residues K11, F59, R87, T93, R104, and N114. The Pros-phosphohistidine intermediate role is filled by H117.

It belongs to the NDK family. In terms of assembly, homotetramer. It depends on Mg(2+) as a cofactor.

The protein resides in the cytoplasm. It carries out the reaction a 2'-deoxyribonucleoside 5'-diphosphate + ATP = a 2'-deoxyribonucleoside 5'-triphosphate + ADP. It catalyses the reaction a ribonucleoside 5'-diphosphate + ATP = a ribonucleoside 5'-triphosphate + ADP. Its function is as follows. Major role in the synthesis of nucleoside triphosphates other than ATP. The ATP gamma phosphate is transferred to the NDP beta phosphate via a ping-pong mechanism, using a phosphorylated active-site intermediate. The sequence is that of Nucleoside diphosphate kinase from Pseudomonas aeruginosa (strain UCBPP-PA14).